We begin with the raw amino-acid sequence, 82 residues long: MDSIISAASVIAAGLSVGLAAIGPGIGQGNAAGQAVEGIARQPEAENKIRGTLLLSLAFMEALTIYGLVVALSLLFANPFTS.

2 helical membrane-spanning segments follow: residues 4 to 24 (IISA…AIGP) and 57 to 77 (LAFM…LLFA).

The protein belongs to the ATPase C chain family. F-type ATPases have 2 components, F(1) - the catalytic core - and F(0) - the membrane proton channel. F(1) has five subunits: alpha(3), beta(3), gamma(1), delta(1), epsilon(1). F(0) has four main subunits: a(1), b(1), b'(1) and c(10-14). The alpha and beta chains form an alternating ring which encloses part of the gamma chain. F(1) is attached to F(0) by a central stalk formed by the gamma and epsilon chains, while a peripheral stalk is formed by the delta, b and b' chains.

It is found in the plastid. It localises to the chloroplast thylakoid membrane. Functionally, f(1)F(0) ATP synthase produces ATP from ADP in the presence of a proton or sodium gradient. F-type ATPases consist of two structural domains, F(1) containing the extramembraneous catalytic core and F(0) containing the membrane proton channel, linked together by a central stalk and a peripheral stalk. During catalysis, ATP synthesis in the catalytic domain of F(1) is coupled via a rotary mechanism of the central stalk subunits to proton translocation. In terms of biological role, key component of the F(0) channel; it plays a direct role in translocation across the membrane. A homomeric c-ring of between 10-14 subunits forms the central stalk rotor element with the F(1) delta and epsilon subunits. In Heterosigma akashiwo (strain NIES-293 / 8280G21-1), this protein is ATP synthase subunit c, chloroplastic.